A 130-amino-acid polypeptide reads, in one-letter code: UPF0102 protein BT_1882 (130 aa).

The protein belongs to the UPF0102 family.

The protein is UPF0102 protein BT_1882 of Bartonella tribocorum (strain CIP 105476 / IBS 506).